A 368-amino-acid polypeptide reads, in one-letter code: N-succinylamino acid racemase (368 aa).

2-succinylbenzoate contacts are provided by residues S135 and 161 to 163 (KLK). Catalysis depends on K163, which acts as the Proton donor. Residue D189 participates in Mg(2+) binding. N191 serves as a coordination point for 2-succinylbenzoate. Positions 214 and 239 each coordinate Mg(2+). K263 (proton acceptor) is an active-site residue. I293 lines the 2-succinylbenzoate pocket.

It belongs to the mandelate racemase/muconate lactonizing enzyme family. MenC type 2 subfamily. As to quaternary structure, homooctamer. A divalent metal cation serves as cofactor.

The catalysed reaction is N-acetyl-D-methionine = N-acetyl-L-methionine. The enzyme catalyses (1R,6R)-6-hydroxy-2-succinyl-cyclohexa-2,4-diene-1-carboxylate = 2-succinylbenzoate + H2O. Its activity is regulated as follows. Inhibited by EDTA and sulfhydryl reagents such as p-chloromercuribenzoic acid. Both OSBS and NAAAR activities are inhibited competitively by salicylhydroxamate. In terms of biological role, acts as a N-succinylamino acid racemase (NSAR) that catalyzes the racemization of N-succinyl-phenylglycine and N-succinyl-methionine. Can catalyze the racemization of a broad range of N-acylamino acids, including N-acetyl-D/L-methionine, N-propionyl-D/L-methionine, N-butyryl-D/L-methionine and N-chloroacetyl-L-valine. Also converts 2-succinyl-6-hydroxy-2,4-cyclohexadiene-1-carboxylate (SHCHC) to 2-succinylbenzoate (OSB). Catalyzes both N-succinylamino acid racemization and OSB synthesis at equivalent rates. NSAR is probably the biological function of this enzyme. The sequence is that of N-succinylamino acid racemase from Amycolatopsis sp.